The chain runs to 1172 residues: DNA-directed RNA polymerase subunit beta (1172 aa).

Belongs to the RNA polymerase beta chain family. As to quaternary structure, the RNAP catalytic core consists of 2 alpha, 1 beta, 1 beta' and 1 omega subunit. When a sigma factor is associated with the core the holoenzyme is formed, which can initiate transcription.

The enzyme catalyses RNA(n) + a ribonucleoside 5'-triphosphate = RNA(n+1) + diphosphate. Functionally, DNA-dependent RNA polymerase catalyzes the transcription of DNA into RNA using the four ribonucleoside triphosphates as substrates. The sequence is that of DNA-directed RNA polymerase subunit beta from Mycobacterium sp. (strain JLS).